The sequence spans 249 residues: Protein ZPS1 (249 aa).

The first 20 residues, 1–20, serve as a signal peptide directing secretion; the sequence is MKFSSGKSIIFATIASLALS. N-linked (GlcNAc...) asparagine glycans are attached at residues Asn28, Asn57, Asn98, and Asn217.

Belongs to the ZPS1 family.

The sequence is that of Protein ZPS1 (ZPS1) from Saccharomyces cerevisiae (strain ATCC 204508 / S288c) (Baker's yeast).